The sequence spans 445 residues: 3-phosphoshikimate 1-carboxyvinyltransferase (445 aa).

The 3-phosphoshikimate site is built by lysine 21, serine 22, and arginine 26. Residue lysine 21 participates in phosphoenolpyruvate binding. Phosphoenolpyruvate-binding residues include glycine 92 and arginine 120. Serine 165, glutamine 166, aspartate 307, and lysine 334 together coordinate 3-phosphoshikimate. Glutamine 166 contacts phosphoenolpyruvate. Aspartate 307 acts as the Proton acceptor in catalysis. Arginine 338, arginine 379, and lysine 405 together coordinate phosphoenolpyruvate.

The protein belongs to the EPSP synthase family. Monomer.

The protein localises to the cytoplasm. It carries out the reaction 3-phosphoshikimate + phosphoenolpyruvate = 5-O-(1-carboxyvinyl)-3-phosphoshikimate + phosphate. Its pathway is metabolic intermediate biosynthesis; chorismate biosynthesis; chorismate from D-erythrose 4-phosphate and phosphoenolpyruvate: step 6/7. Its function is as follows. Catalyzes the transfer of the enolpyruvyl moiety of phosphoenolpyruvate (PEP) to the 5-hydroxyl of shikimate-3-phosphate (S3P) to produce enolpyruvyl shikimate-3-phosphate and inorganic phosphate. The protein is 3-phosphoshikimate 1-carboxyvinyltransferase of Chlamydia pneumoniae (Chlamydophila pneumoniae).